The chain runs to 163 residues: Crossover junction endodeoxyribonuclease RuvC (163 aa).

Active-site residues include Asp9, Glu76, and Asp148. Mg(2+) contacts are provided by Asp9, Glu76, and Asp148.

This sequence belongs to the RuvC family. Homodimer which binds Holliday junction (HJ) DNA. The HJ becomes 2-fold symmetrical on binding to RuvC with unstacked arms; it has a different conformation from HJ DNA in complex with RuvA. In the full resolvosome a probable DNA-RuvA(4)-RuvB(12)-RuvC(2) complex forms which resolves the HJ. Requires Mg(2+) as cofactor.

The protein resides in the cytoplasm. It catalyses the reaction Endonucleolytic cleavage at a junction such as a reciprocal single-stranded crossover between two homologous DNA duplexes (Holliday junction).. Its function is as follows. The RuvA-RuvB-RuvC complex processes Holliday junction (HJ) DNA during genetic recombination and DNA repair. Endonuclease that resolves HJ intermediates. Cleaves cruciform DNA by making single-stranded nicks across the HJ at symmetrical positions within the homologous arms, yielding a 5'-phosphate and a 3'-hydroxyl group; requires a central core of homology in the junction. The consensus cleavage sequence is 5'-(A/T)TT(C/G)-3'. Cleavage occurs on the 3'-side of the TT dinucleotide at the point of strand exchange. HJ branch migration catalyzed by RuvA-RuvB allows RuvC to scan DNA until it finds its consensus sequence, where it cleaves and resolves the cruciform DNA. This is Crossover junction endodeoxyribonuclease RuvC from Trichodesmium erythraeum (strain IMS101).